Here is a 688-residue protein sequence, read N- to C-terminus: Elongation factor G (688 aa).

Positions 8 to 282 (EKTRNIGIIA…AIVDYLPAPC (275 aa)) constitute a tr-type G domain. GTP is bound by residues 17 to 24 (AHIDAGKT), 81 to 85 (DTPGH), and 135 to 138 (NKMD).

Belongs to the TRAFAC class translation factor GTPase superfamily. Classic translation factor GTPase family. EF-G/EF-2 subfamily.

Its subcellular location is the cytoplasm. Functionally, catalyzes the GTP-dependent ribosomal translocation step during translation elongation. During this step, the ribosome changes from the pre-translocational (PRE) to the post-translocational (POST) state as the newly formed A-site-bound peptidyl-tRNA and P-site-bound deacylated tRNA move to the P and E sites, respectively. Catalyzes the coordinated movement of the two tRNA molecules, the mRNA and conformational changes in the ribosome. The sequence is that of Elongation factor G from Onion yellows phytoplasma (strain OY-M).